We begin with the raw amino-acid sequence, 98 residues long: Large ribosomal subunit protein uL23 (98 aa).

Belongs to the universal ribosomal protein uL23 family. As to quaternary structure, part of the 50S ribosomal subunit. Contacts protein L29, and trigger factor when it is bound to the ribosome.

Its function is as follows. One of the early assembly proteins it binds 23S rRNA. One of the proteins that surrounds the polypeptide exit tunnel on the outside of the ribosome. Forms the main docking site for trigger factor binding to the ribosome. This is Large ribosomal subunit protein uL23 from Herpetosiphon aurantiacus (strain ATCC 23779 / DSM 785 / 114-95).